Reading from the N-terminus, the 359-residue chain is tRNA-specific 2-thiouridylase MnmA (359 aa).

ATP-binding positions include 7–14 (AMSGGVDS) and methionine 33. Catalysis depends on cysteine 101, which acts as the Nucleophile. A disulfide bond links cysteine 101 and cysteine 198. Glycine 125 serves as a coordination point for ATP. The interaction with tRNA stretch occupies residues 148–150 (KDQ). The active-site Cysteine persulfide intermediate is cysteine 198.

It belongs to the MnmA/TRMU family.

The protein localises to the cytoplasm. The catalysed reaction is S-sulfanyl-L-cysteinyl-[protein] + uridine(34) in tRNA + AH2 + ATP = 2-thiouridine(34) in tRNA + L-cysteinyl-[protein] + A + AMP + diphosphate + H(+). In terms of biological role, catalyzes the 2-thiolation of uridine at the wobble position (U34) of tRNA, leading to the formation of s(2)U34. This is tRNA-specific 2-thiouridylase MnmA from Chloroflexus aurantiacus (strain ATCC 29366 / DSM 635 / J-10-fl).